A 745-amino-acid chain; its full sequence is 5-methyltetrahydropteroyltriglutamate--homocysteine methyltransferase (745 aa).

5-methyltetrahydropteroyltri-L-glutamate contacts are provided by residues 19–22 and K119; that span reads RELK. L-homocysteine contacts are provided by residues 418-420 and E471; that span reads IGS. Residues 418 to 420 and E471 contribute to the L-methionine site; that span reads IGS. Residues 502-503 and W548 each bind 5-methyltetrahydropteroyltri-L-glutamate; that span reads RC. D586 lines the L-homocysteine pocket. D586 contacts L-methionine. E592 contributes to the 5-methyltetrahydropteroyltri-L-glutamate binding site. Zn(2+) is bound by residues H628, C630, and E652. H681 serves as the catalytic Proton donor. C713 contacts Zn(2+).

The protein belongs to the vitamin-B12 independent methionine synthase family. Requires Zn(2+) as cofactor.

The catalysed reaction is 5-methyltetrahydropteroyltri-L-glutamate + L-homocysteine = tetrahydropteroyltri-L-glutamate + L-methionine. The protein operates within amino-acid biosynthesis; L-methionine biosynthesis via de novo pathway; L-methionine from L-homocysteine (MetE route): step 1/1. In terms of biological role, catalyzes the transfer of a methyl group from 5-methyltetrahydrofolate to homocysteine resulting in methionine formation. The sequence is that of 5-methyltetrahydropteroyltriglutamate--homocysteine methyltransferase from Corynebacterium glutamicum (strain R).